The following is a 201-amino-acid chain: Small ribosomal subunit protein eS1 (201 aa).

It belongs to the eukaryotic ribosomal protein eS1 family.

In Methanoregula boonei (strain DSM 21154 / JCM 14090 / 6A8), this protein is Small ribosomal subunit protein eS1.